Reading from the N-terminus, the 177-residue chain is Large ribosomal subunit protein uL6 (177 aa).

The protein belongs to the universal ribosomal protein uL6 family. Part of the 50S ribosomal subunit.

Its function is as follows. This protein binds to the 23S rRNA, and is important in its secondary structure. It is located near the subunit interface in the base of the L7/L12 stalk, and near the tRNA binding site of the peptidyltransferase center. This chain is Large ribosomal subunit protein uL6, found in Rhizobium rhizogenes (strain K84 / ATCC BAA-868) (Agrobacterium radiobacter).